A 120-amino-acid polypeptide reads, in one-letter code: NAD(P)H-quinone oxidoreductase subunit 3 (120 aa).

The next 3 membrane-spanning stretches (helical) occupy residues 6-26 (GYDA…LALV), 64-84 (MFAL…PWAV), and 89-109 (LGLL…VALA).

It belongs to the complex I subunit 3 family. NDH-1 can be composed of about 15 different subunits; different subcomplexes with different compositions have been identified which probably have different functions.

The protein localises to the cellular thylakoid membrane. The catalysed reaction is a plastoquinone + NADH + (n+1) H(+)(in) = a plastoquinol + NAD(+) + n H(+)(out). It catalyses the reaction a plastoquinone + NADPH + (n+1) H(+)(in) = a plastoquinol + NADP(+) + n H(+)(out). Functionally, NDH-1 shuttles electrons from an unknown electron donor, via FMN and iron-sulfur (Fe-S) centers, to quinones in the respiratory and/or the photosynthetic chain. The immediate electron acceptor for the enzyme in this species is believed to be plastoquinone. Couples the redox reaction to proton translocation, and thus conserves the redox energy in a proton gradient. Cyanobacterial NDH-1 also plays a role in inorganic carbon-concentration. The polypeptide is NAD(P)H-quinone oxidoreductase subunit 3 (Prochlorococcus marinus (strain MIT 9211)).